We begin with the raw amino-acid sequence, 442 residues long: ATP-dependent RNA helicase SUB2 (442 aa).

The Q motif motif lies at 59 to 87; the sequence is TGFRDFLLKPELLRAISDLGFEHPSEVQQ. A Helicase ATP-binding domain is found at 90–265; it reads IPQAILGTDV…KKFMQSPLEI (176 aa). 103 to 110 contributes to the ATP binding site; that stretch reads AKSGMGKT. The DECD box motif lies at 212–215; sequence DECD. The Helicase C-terminal domain occupies 277–438; sequence GLQQFYLKLE…TLPETVDPAT (162 aa).

This sequence belongs to the DEAD box helicase family. DECD subfamily.

The protein localises to the nucleus. The catalysed reaction is ATP + H2O = ADP + phosphate + H(+). Functionally, ATP-binding RNA helicase involved in transcription elongation and required for the export of mRNA out of the nucleus. SUB2 also plays a role in pre-mRNA splicing and spliceosome assembly. May be involved in rDNA and telomeric silencing, and maintenance of genome integrity. This is ATP-dependent RNA helicase SUB2 (SUB2) from Cryptococcus neoformans var. neoformans serotype D (strain JEC21 / ATCC MYA-565) (Filobasidiella neoformans).